Here is a 511-residue protein sequence, read N- to C-terminus: GMP synthase [glutamine-hydrolyzing] (511 aa).

Residues 5–195 (DILVLDFGSQ…AKYACNCESV (191 aa)) form the Glutamine amidotransferase type-1 domain. The Nucleophile role is filled by Cys82. Residues His169 and Glu171 contribute to the active site. The region spanning 196–386 (WNMGSFAKTQ…LGLSKEVVYR (191 aa)) is the GMPS ATP-PPase domain. ATP is bound at residue 223–229 (SGGVDSS).

In terms of assembly, homodimer.

The enzyme catalyses XMP + L-glutamine + ATP + H2O = GMP + L-glutamate + AMP + diphosphate + 2 H(+). The protein operates within purine metabolism; GMP biosynthesis; GMP from XMP (L-Gln route): step 1/1. In terms of biological role, catalyzes the synthesis of GMP from XMP. The chain is GMP synthase [glutamine-hydrolyzing] from Campylobacter jejuni subsp. jejuni serotype O:23/36 (strain 81-176).